Consider the following 476-residue polypeptide: MASRRLALNLAQGVKARAGGVINPFRRGLATPHSGTGIKTQTTTLKNGLTVASQYSPYAQTSTVGMWIDAGSRAETDETNGTAHFLEHLAFKGTTKRTQQQLELEIENMGAHLNAYTSRENTVYFAKALNEDVPKCVDILQDILQNSKLEESAIERERDVILRESEEVEKQLEEVVFDHLHATAYQHQPLGRTILGPRENIRDITRTELVNYIKNNYTADRMVLVGAGGVPHEQLVEMADKYFSKLPATAPVSSASILSKKKPDFIGSDIRIRDDTIPTANIAIAVEGVSWSDDDYFTGLVTQAIVGNYDKALGNAPHQGSKLSGFVHKHDLATSFMSFSTSYSDTGLWGIYLVTDKLDRVDDLVHFSLREWTRLCSNVSEAEVERAKAQLKASILLSLDGTTAVAEDIGRQIVTTGRRMSPAEIERIIDAVSAKDVMDFANKKIWDQDIAISAVGSIEGLFDYARIRGDMSRNAF.

The N-terminal 28 residues, 1–28, are a transit peptide targeting the mitochondrion; that stretch reads MASRRLALNLAQGVKARAGGVINPFRRG. Residue H84 coordinates Zn(2+). The active-site Proton acceptor is E87. The Zn(2+) site is built by H88 and E164.

Belongs to the peptidase M16 family. As to quaternary structure, heterodimer of mpp (alpha) and pep (beta) subunits, forming the mitochondrial processing protease (MPP) in which mpp is involved in substrate recognition and binding and pep is the catalytic subunit. Component of the ubiquinol-cytochrome c oxidoreductase (cytochrome b-c1 complex, complex III, CIII), a multisubunit enzyme composed of 10 subunits. The complex is composed of 3 respiratory subunits cytochrome b (cob), cytochrome c1 (cyt-1) and Rieske protein (fes-1), 2 core protein subunits pep and ucr-1, and 5 low-molecular weight protein subunits qcr6, qcr7, qcr8, qcr9 and probably NCU16844/qcr10. The complex exists as an obligatory dimer and forms supercomplexes (SCs) in the inner mitochondrial membrane with NADH-ubiquinone oxidoreductase (complex I, CI) and cytochrome c oxidase (complex IV, CIV), resulting in different assemblies (supercomplexes SCI(1)III(2), SCIII(2)IV(1) and SCIII(2)IV(2) as well as higher order I(x)III(y)IV(z) megacomplexes). Requires Zn(2+) as cofactor.

It is found in the mitochondrion matrix. The protein localises to the mitochondrion inner membrane. The catalysed reaction is Release of N-terminal transit peptides from precursor proteins imported into the mitochondrion, typically with Arg in position P2.. Binding to mpp is required for catalytic activity. Inhibited by metal chelator ethylenediaminetetraacetic acid (EDTA). Its function is as follows. Catalytic subunit of the essential mitochondrial processing protease (MPP), which cleaves the mitochondrial sequence off newly imported precursors proteins. Preferentially, cleaves after an arginine at position P2. Functionally, component of the ubiquinol-cytochrome c oxidoreductase, a multisubunit transmembrane complex that is part of the mitochondrial electron transport chain which drives oxidative phosphorylation. The respiratory chain contains 3 multisubunit complexes succinate dehydrogenase (complex II, CII), ubiquinol-cytochrome c oxidoreductase (cytochrome b-c1 complex, complex III, CIII) and cytochrome c oxidase (complex IV, CIV), that cooperate to transfer electrons derived from NADH and succinate to molecular oxygen, creating an electrochemical gradient over the inner membrane that drives transmembrane transport and the ATP synthase. The cytochrome b-c1 complex catalyzes electron transfer from ubiquinol to cytochrome c, linking this redox reaction to translocation of protons across the mitochondrial inner membrane, with protons being carried across the membrane as hydrogens on the quinol. In the process called Q cycle, 2 protons are consumed from the matrix, 4 protons are released into the intermembrane space and 2 electrons are passed to cytochrome c. This Neurospora crassa (strain ATCC 24698 / 74-OR23-1A / CBS 708.71 / DSM 1257 / FGSC 987) protein is Mitochondrial-processing peptidase subunit beta.